We begin with the raw amino-acid sequence, 492 residues long: Ketol-acid reductoisomerase (NADP(+)) (492 aa).

In terms of domain architecture, KARI N-terminal Rossmann spans 15–208; sequence AQLGQCRFMD…GGDRAGVLQS (194 aa). NADP(+)-binding positions include 45–48, Arg68, Arg76, Ser78, and 108–110; these read CGAQ and DKQ. Residue His132 is part of the active site. Gly158 lines the NADP(+) pocket. KARI C-terminal knotted domains are found at residues 209–353 and 354–486; these read SFIA…DEQT and YFDK…MTDM. Residues Asp217, Glu221, Glu389, and Glu393 each contribute to the Mg(2+) site. A substrate-binding site is contributed by Ser414.

It belongs to the ketol-acid reductoisomerase family. Mg(2+) serves as cofactor.

The enzyme catalyses (2R)-2,3-dihydroxy-3-methylbutanoate + NADP(+) = (2S)-2-acetolactate + NADPH + H(+). It carries out the reaction (2R,3R)-2,3-dihydroxy-3-methylpentanoate + NADP(+) = (S)-2-ethyl-2-hydroxy-3-oxobutanoate + NADPH + H(+). It functions in the pathway amino-acid biosynthesis; L-isoleucine biosynthesis; L-isoleucine from 2-oxobutanoate: step 2/4. It participates in amino-acid biosynthesis; L-valine biosynthesis; L-valine from pyruvate: step 2/4. Involved in the biosynthesis of branched-chain amino acids (BCAA). Catalyzes an alkyl-migration followed by a ketol-acid reduction of (S)-2-acetolactate (S2AL) to yield (R)-2,3-dihydroxy-isovalerate. In the isomerase reaction, S2AL is rearranged via a Mg-dependent methyl migration to produce 3-hydroxy-3-methyl-2-ketobutyrate (HMKB). In the reductase reaction, this 2-ketoacid undergoes a metal-dependent reduction by NADPH to yield (R)-2,3-dihydroxy-isovalerate. This chain is Ketol-acid reductoisomerase (NADP(+)), found in Shewanella oneidensis (strain ATCC 700550 / JCM 31522 / CIP 106686 / LMG 19005 / NCIMB 14063 / MR-1).